A 292-amino-acid chain; its full sequence is Large ribosomal subunit protein uL4 (292 aa).

2 stretches are compositionally biased toward basic and acidic residues: residues 1–33 and 42–51; these read MVEV…DKTA and KVSDKAESTP. Disordered stretches follow at residues 1–59 and 132–158; these read MVEV…VKTS and GTHK…TGKA.

The protein belongs to the universal ribosomal protein uL4 family. In terms of assembly, part of the 50S ribosomal subunit.

In terms of biological role, one of the primary rRNA binding proteins, this protein initially binds near the 5'-end of the 23S rRNA. It is important during the early stages of 50S assembly. It makes multiple contacts with different domains of the 23S rRNA in the assembled 50S subunit and ribosome. Forms part of the polypeptide exit tunnel. The sequence is that of Large ribosomal subunit protein uL4 from Mycoplasmopsis pulmonis (strain UAB CTIP) (Mycoplasma pulmonis).